A 1197-amino-acid polypeptide reads, in one-letter code: Serine/threonine-protein kinase pakA (1197 aa).

Disordered regions lie at residues 1–96, 328–383, 430–468, 485–543, and 562–819; these read MEEK…PIYR, QKED…KNID, REEEEENEDRVERELASRRRQEEDRIKREEEEEEEEQRN, EEEE…NLMG, and NSSG…RVGT. Over residues 19–30 the composition is skewed to basic and acidic residues; sequence QKFEQFLDKTDK. The segment covering 34–49 has biased composition (polar residues); the sequence is ATRNNYRGPVSSSTGI. Positions 51–69 are enriched in basic and acidic residues; the sequence is NDKEKKSHSYFKVREEGSN. The segment covering 70–79 has biased composition (polar residues); sequence KRPSSFSASN. Composition is skewed to low complexity over residues 80–94 and 346–381; these read PITPSSPQSTHSSPI and NNNNNENNENDNNNNNNNNNNNNNNNNNNNNNNNKN. Over residues 439-458 the composition is skewed to basic and acidic residues; it reads RVERELASRRRQEEDRIKRE. Low complexity predominate over residues 494–523; sequence SQLQSSQQQQKSSSTQRSSNTVTSTSSSST. Over residues 524–536 the composition is skewed to polar residues; it reads GGDSNPSTSQKPT. T585 bears the Phosphothreonine; by PKB mark. The segment covering 593–615 has biased composition (polar residues); sequence SENTPLVSSIDNNGVNNKMSRSH. 2 stretches are compositionally biased toward low complexity: residues 636–653 and 671–707; these read NVNNSNNNNNNNNINNNH and SSSMSTPSISPSQAGNSATSTVPSSPISASTSMSSPT. Over residues 718–727 the composition is skewed to polar residues; that stretch reads TTSTGSTRKG. Basic and acidic residues predominate over residues 728–737; sequence SISEREDKKK. Positions 739–756 are enriched in low complexity; the sequence is SSSSTSSSSSSNGGLSSS. Residues 757–790 show a composition bias toward basic and acidic residues; sequence GKDHKKDHSSEEKEKEKKSFFNKLFSKEKKDHHS. A CRIB domain is found at 817–830; the sequence is VGTPFNVKHDVHVN. The Protein kinase domain maps to 911–1164; it reads YYNINKIGEG…SSSLLHHPFL (254 aa). ATP contacts are provided by residues 917-925 and K940; that span reads IGEGGAGEV. The active-site Proton acceptor is the D1032.

It belongs to the protein kinase superfamily. STE Ser/Thr protein kinase family. STE20 subfamily. Requires Mg(2+) as cofactor. In terms of processing, phosphorylation on Thr-585 results in cAMP-mediated activation and localization to the cytoskeleton. In terms of tissue distribution, colocalizes with myosin II to the cleavage furrow of cells undergoing cytokinesis and the posterior cortex of polarized cells.

It localises to the cytoplasm. The protein localises to the cytosol. It is found in the cytoskeleton. It catalyses the reaction L-seryl-[protein] + ATP = O-phospho-L-seryl-[protein] + ADP + H(+). The catalysed reaction is L-threonyl-[protein] + ATP = O-phospho-L-threonyl-[protein] + ADP + H(+). In terms of biological role, regulator of the myosin II component of the cytoskeleton: required for regulation of cytokinesis. Functions during chemotaxis, required for maintaining the direction of cell movement, suppressing lateral pseudopod extension, and proper retraction of the posterior of chemotaxing cells. This Dictyostelium discoideum (Social amoeba) protein is Serine/threonine-protein kinase pakA (pakA).